Consider the following 173-residue polypeptide: Peptide deformylase (173 aa).

Fe cation contacts are provided by cysteine 91 and histidine 133. Residue glutamate 134 is part of the active site. Histidine 137 contributes to the Fe cation binding site.

It belongs to the polypeptide deformylase family. It depends on Fe(2+) as a cofactor.

It catalyses the reaction N-terminal N-formyl-L-methionyl-[peptide] + H2O = N-terminal L-methionyl-[peptide] + formate. In terms of biological role, removes the formyl group from the N-terminal Met of newly synthesized proteins. Requires at least a dipeptide for an efficient rate of reaction. N-terminal L-methionine is a prerequisite for activity but the enzyme has broad specificity at other positions. The chain is Peptide deformylase from Buchnera aphidicola subsp. Acyrthosiphon pisum (strain 5A).